The following is a 163-amino-acid chain: ADP-ribosylation factor-like protein 2-binding protein (163 aa).

This sequence belongs to the ARL2BP family. As to quaternary structure, interacts with GTP bound ARL2 and ARL3; the complex ARL2-ARL2BP as well as ARL2BP alone, binds to SLC25A4/ANT1. Interaction with ARL2 may be required for targeting to cilia basal body. Interacts with STAT3; interaction is enhanced with ARL2. Found in a complex with ARL2, ARL2BP and SLC25A4. Interacts with STAT2, STAT3 and STAT4. Found in a complex with ARL2BP, ARL2 and SLC25A6. As to expression, expressed in brain.

The protein resides in the cytoplasm. It is found in the mitochondrion intermembrane space. Its subcellular location is the cytoskeleton. The protein localises to the microtubule organizing center. It localises to the centrosome. The protein resides in the nucleus. It is found in the spindle. Its subcellular location is the cilium basal body. Together with ARL2, plays a role in the nuclear translocation, retention and transcriptional activity of STAT3. May play a role as an effector of ARL2. The sequence is that of ADP-ribosylation factor-like protein 2-binding protein (ARL2BP) from Bos taurus (Bovine).